Reading from the N-terminus, the 498-residue chain is Actin-binding protein WASF2 (498 aa).

Disordered stretches follow at residues Lys173–Trp203 and Asn240–Asp435. Low complexity predominate over residues Ser252–Ser263. Residues Ser298–Phe407 are compositionally biased toward pro residues. Positions Ala436 to Val453 constitute a WH2 domain. A Phosphoserine modification is found at Ser474.

Belongs to the SCAR/WAVE family. As to quaternary structure, binds actin and the Arp2/3 complex. Interacts with BAIAP2. Component of the WAVE2 complex composed of ABI1, CYFIP1/SRA1, NCKAP1/NAP1 (NCKAP1l/HEM1 in hematopoietic cells) and WASF2/WAVE2. Directly interacts with BRK1. Interacts with FNBP1L (via the SH3 domain). (Microbial infection) Interacts with human cytomegalovirus protein UL135. Expressed in all tissues with strongest expression in placenta, lung, and peripheral blood leukocytes, but not in skeletal muscle.

The protein resides in the cytoplasm. It is found in the cytoskeleton. The protein localises to the cell projection. It localises to the lamellipodium. Its subcellular location is the basolateral cell membrane. In terms of biological role, downstream effector molecule involved in the transmission of signals from tyrosine kinase receptors and small GTPases to the actin cytoskeleton. Promotes formation of actin filaments. Part of the WAVE complex that regulates lamellipodia formation. The WAVE complex regulates actin filament reorganization via its interaction with the Arp2/3 complex. The polypeptide is Actin-binding protein WASF2 (Homo sapiens (Human)).